We begin with the raw amino-acid sequence, 125 residues long: Small ribosomal subunit protein uS12 (125 aa).

Asp89 carries the post-translational modification 3-methylthioaspartic acid. A disordered region spans residues 100–125; sequence GSLDTQGVQNRKQARSKYGAKRPKKA. Residues 111–125 are compositionally biased toward basic residues; the sequence is KQARSKYGAKRPKKA.

Belongs to the universal ribosomal protein uS12 family. Part of the 30S ribosomal subunit. Contacts proteins S8 and S17. May interact with IF1 in the 30S initiation complex.

Functionally, with S4 and S5 plays an important role in translational accuracy. In terms of biological role, interacts with and stabilizes bases of the 16S rRNA that are involved in tRNA selection in the A site and with the mRNA backbone. Located at the interface of the 30S and 50S subunits, it traverses the body of the 30S subunit contacting proteins on the other side and probably holding the rRNA structure together. The combined cluster of proteins S8, S12 and S17 appears to hold together the shoulder and platform of the 30S subunit. This is Small ribosomal subunit protein uS12 from Thioalkalivibrio sulfidiphilus (strain HL-EbGR7).